A 190-amino-acid chain; its full sequence is Putative manganese efflux pump MntP (190 aa).

The next 6 membrane-spanning stretches (helical) occupy residues A5–G25, W41–I61, F64–M84, T105–L125, M127–T147, and I169–F189.

It belongs to the MntP (TC 9.B.29) family.

The protein resides in the cell inner membrane. Probably functions as a manganese efflux pump. This chain is Putative manganese efflux pump MntP, found in Oleidesulfovibrio alaskensis (strain ATCC BAA-1058 / DSM 17464 / G20) (Desulfovibrio alaskensis).